The primary structure comprises 434 residues: Nicotinate phosphoribosyltransferase (434 aa).

Residue histidine 242 is modified to Phosphohistidine; by autocatalysis.

This sequence belongs to the NAPRTase family. Transiently phosphorylated on a His residue during the reaction cycle. Phosphorylation strongly increases the affinity for substrates and increases the rate of nicotinate D-ribonucleotide production. Dephosphorylation regenerates the low-affinity form of the enzyme, leading to product release.

The catalysed reaction is nicotinate + 5-phospho-alpha-D-ribose 1-diphosphate + ATP + H2O = nicotinate beta-D-ribonucleotide + ADP + phosphate + diphosphate. It participates in cofactor biosynthesis; NAD(+) biosynthesis; nicotinate D-ribonucleotide from nicotinate: step 1/1. Functionally, catalyzes the synthesis of beta-nicotinate D-ribonucleotide from nicotinate and 5-phospho-D-ribose 1-phosphate at the expense of ATP. This chain is Nicotinate phosphoribosyltransferase, found in Bartonella tribocorum (strain CIP 105476 / IBS 506).